A 523-amino-acid polypeptide reads, in one-letter code: NADP-specific glutamate dehydrogenase (523 aa).

The interval 26 to 50 (CARGRSAKRDVAAKRLRSRSPRMDA) is disordered. K202 is a catalytic residue.

Belongs to the Glu/Leu/Phe/Val dehydrogenases family. As to quaternary structure, homo- and heterohexamer of alpha and beta subunits. Both subunits are encoded by the same gene. In terms of processing, the N-termini of the alpha and the beta chains are blocked.

The protein localises to the plastid. It is found in the chloroplast. It carries out the reaction L-glutamate + NADP(+) + H2O = 2-oxoglutarate + NH4(+) + NADPH + H(+). The polypeptide is NADP-specific glutamate dehydrogenase (Chlorella sorokiniana (Freshwater green alga)).